The sequence spans 92 residues: N(2)-fixation sustaining protein CowN (92 aa).

It belongs to the CowN family.

Its function is as follows. Is required to sustain N(2)-dependent growth in the presence of low levels of carbon monoxide (CO). Probably acts by protecting the N(2) fixation ability of the nitrogenase complex, which is inactivated in the presence of CO. The polypeptide is N(2)-fixation sustaining protein CowN (Cereibacter sphaeroides (strain ATCC 17025 / ATH 2.4.3) (Rhodobacter sphaeroides)).